The following is a 181-amino-acid chain: Trafficking protein particle complex subunit 3-like protein (181 aa).

Cys-68 carries S-palmitoyl cysteine lipidation.

This sequence belongs to the TRAPP small subunits family. BET3 subfamily. In terms of assembly, homodimer. Component of the multisubunit TRAPP (transport protein particle) complex, which includes at least TRAPPC2, TRAPPC2L, TRAPPC3, TRAPPC3L, TRAPPC4, TRAPPC5, TRAPPC8, TRAPPC9, TRAPPC10, TRAPPC11 and TRAPPC12.

The protein localises to the golgi apparatus. Its subcellular location is the cis-Golgi network. It localises to the endoplasmic reticulum. Its function is as follows. May play a role in vesicular transport from endoplasmic reticulum to Golgi. The sequence is that of Trafficking protein particle complex subunit 3-like protein (TRAPPC3L) from Homo sapiens (Human).